The primary structure comprises 919 residues: PAX3- and PAX7-binding protein 1 (919 aa).

The span at 1 to 11 (MFRKARRVNVR) shows a compositional bias: basic residues. 3 disordered regions span residues 1–120 (MFRK…ENEE), 151–206 (KTEL…GGAF), and 237–277 (AREL…RIVF). Phosphoserine is present on serine 16. The span at 16–28 (SEEEERERDEEQE) shows a compositional bias: acidic residues. The segment covering 49–59 (RAPAGESLLGP) has biased composition (low complexity). Residues 75–87 (AEAGGGISGGAEP) are compositionally biased toward gly residues. Residue lysine 151 forms a Glycyl lysine isopeptide (Lys-Gly) (interchain with G-Cter in SUMO1); alternate linkage. A Glycyl lysine isopeptide (Lys-Gly) (interchain with G-Cter in SUMO2); alternate cross-link involves residue lysine 151. Serine 160 is modified (phosphoserine). Basic and acidic residues predominate over residues 163–174 (PLDKTCHAKDTN). Residues 185 to 195 (GEDEMDMESEK) show a composition bias toward acidic residues. Phosphoserine is present on serine 193. A compositionally biased stretch (basic and acidic residues) spans 237 to 258 (ARELGDFTPHDSEPGKGRLVRE). Residues 259 to 270 (DENDASDDEDDD) show a composition bias toward acidic residues. 4 positions are modified to phosphoserine: serine 264, serine 297, serine 559, and serine 560. The tract at residues 380–560 (TPSNEMAPVT…MADHLEGLSS (181 aa)) is necessary and sufficient for interaction with PAX7. The tract at residues 533-566 (EREARRTRRRQAREQTGQMADHLEGLSSDDEETS) is disordered. Position 565 is a phosphothreonine (threonine 565).

The protein belongs to the GCF family. Interacts with PAX3 and PAX7. Interacts with WDR5; associates with a histone methyltransferase (HMT) complex composed at least of RBBP5, ASH2L, SET1, SET2 and KMT2A/MLL1, KMT2D/MLL2, KMT2C/MLL3 and KMT2B/MLL4 through direct interaction with WDR5. Ubiquitously expressed in all tissues tested including skeletal muscle. Expressed in primary myoblasts.

The protein localises to the nucleus. Its function is as follows. Adapter protein linking the transcription factors PAX3 and PAX7 to the histone methylation machinery and involved in myogenesis. Associates with a histone methyltransferase complex that specifically mediates dimethylation and trimethylation of 'Lys-4' of histone H3. Mediates the recruitment of that complex to the transcription factors PAX3 and PAX7 on chromatin to regulate the expression of genes involved in muscle progenitor cells proliferation including ID3 and CDC20. This chain is PAX3- and PAX7-binding protein 1 (Paxbp1), found in Mus musculus (Mouse).